Here is a 166-residue protein sequence, read N- to C-terminus: Large ribosomal subunit protein uL10 (166 aa).

This sequence belongs to the universal ribosomal protein uL10 family. In terms of assembly, part of the ribosomal stalk of the 50S ribosomal subunit. The N-terminus interacts with L11 and the large rRNA to form the base of the stalk. The C-terminus forms an elongated spine to which L12 dimers bind in a sequential fashion forming a multimeric L10(L12)X complex.

Its function is as follows. Forms part of the ribosomal stalk, playing a central role in the interaction of the ribosome with GTP-bound translation factors. The protein is Large ribosomal subunit protein uL10 (rplJ) of Neisseria meningitidis serogroup A / serotype 4A (strain DSM 15465 / Z2491).